The sequence spans 224 residues: Phosphoglycolate phosphatase (224 aa).

Aspartate 8 serves as the catalytic Nucleophile. Positions 8 and 10 each coordinate Mg(2+). Lysine 151 is a substrate binding site. Residues aspartate 174 and aspartate 178 each coordinate Mg(2+).

It belongs to the archaeal SPP-like hydrolase family. Mg(2+) is required as a cofactor.

The enzyme catalyses 2-phosphoglycolate + H2O = glycolate + phosphate. Functionally, catalyzes the dephosphorylation of 2-phosphoglycolate. In Thermoplasma volcanium (strain ATCC 51530 / DSM 4299 / JCM 9571 / NBRC 15438 / GSS1), this protein is Phosphoglycolate phosphatase.